Consider the following 261-residue polypeptide: uncharacterized protein (261 aa).

Residues 1-22 (MAETTEPPSDAGTSQADAMALA) are disordered. Residues 107-127 (IAMAAAVVIICGFTGLSGYIV) traverse the membrane as a helical segment.

This sequence to M.tuberculosis Rv1362c.

The protein localises to the membrane. This is an uncharacterized protein from Mycobacterium tuberculosis (strain ATCC 25618 / H37Rv).